Consider the following 704-residue polypeptide: Ubiquitin-like modifier-activating enzyme atg7 (704 aa).

Residues 372 to 377 (GAGTLG) carry the GXGXXG motif motif. Cysteine 555 functions as the Glycyl thioester intermediate in the catalytic mechanism. The interval 660–699 (ALTEKDYITELSGLAEVQRKAEAAANDVEWDSDEEGMEDE) is homodimerization. The disordered stretch occupies residues 682–704 (AAANDVEWDSDEEGMEDEEPELL). Acidic residues predominate over residues 687 to 704 (VEWDSDEEGMEDEEPELL).

It belongs to the ATG7 family. As to quaternary structure, homodimer. Interacts with ATG8 through a thioester bond between Cys-555 and the C-terminal Gly of ATG8 and with ATG12 through a thioester bond between Cys-555 and the C-terminal Gly of ATG12. Also interacts with ATG3.

It is found in the cytoplasm. Its subcellular location is the preautophagosomal structure. In terms of biological role, E1-like activating enzyme involved in the 2 ubiquitin-like systems required for cytoplasm to vacuole transport (Cvt) and autophagy. Activates ATG12 for its conjugation with ATG5 and ATG8 for its conjugation with phosphatidylethanolamine. Both systems are needed for the ATG8 association to Cvt vesicles and autophagosomes membranes. Autophagy is essential for maintenance of amino acid levels and protein synthesis under nitrogen starvation. Required for selective autophagic degradation of the nucleus (nucleophagy) as well as for mitophagy which contributes to regulate mitochondrial quantity and quality by eliminating the mitochondria to a basal level to fulfill cellular energy requirements and preventing excess ROS production. Required for normal mycelial growth and conidiogenesis, and regulates sclerotial formation. Plays an essential role in pathogenesis. The protein is Ubiquitin-like modifier-activating enzyme atg7 of Botryotinia fuckeliana (strain T4) (Noble rot fungus).